The following is a 393-amino-acid chain: Cysteine protease ATG4B (393 aa).

Methionine 1 is subject to N-acetylmethionine. Serine 34 carries the post-translational modification Phosphoserine. The active-site Nucleophile is the cysteine 74. S-nitrosocysteine is present on cysteine 189. Residues aspartate 278 and histidine 280 contribute to the active site. Residues cysteine 292 and cysteine 301 each carry the S-nitrosocysteine modification. Cysteines 292 and 361 form a disulfide. Serine 316 and serine 383 each carry phosphoserine. The LIR signature appears at 388-391 (FEIL). Residue serine 392 is modified to Phosphoserine.

The protein belongs to the peptidase C54 family. In terms of assembly, interacts with PFKP; promoting phosphorylation of ATG4B at Ser-34. Interacts with GBP7. Phosphorylation at Ser-383 and Ser-392 promotes autophagy by increasing protein delipidation activity without affecting proteolytic activation of ATG8 proteins. Phosphorylation at Ser-316 by ULK1 inhibits autophagy by decreasing both proteolytic activation and delipidation activities. Phosphorylation at Ser-316 is dephosphorylated by protein phosphatase 2A (PP2A). Phosphorylation at Ser-34 by AKT2 promotes its hydrolase activity, leading to increased proteolytic activation and delipidation of ATG8 family proteins. Phosphorylation at Ser-34 by AKT1 promotes mitochondrial localization and inhibition of the F1F0-ATP synthase activity, leading to elevation of mitochondrial reactive oxygen species (ROS). In terms of processing, ubiquitinated by RNF5, leading to its degradation by the proteasome. Post-translationally, S-nitrosylation at Cys-189 and Cys-292 in response to high glucose decreases both proteolytic activation and delipidation activities. O-glycosylated by OGT, leading to increase protease activity, thereby promoting the proteolytic activation of ATG8 family proteins. In terms of processing, forms reversible intrachain disulfide bonds in response to oxidative stress. Forms interchain disulfide bonds, leading to formation of homooligomers in response to oxidation.

The protein resides in the cytoplasm. Its subcellular location is the cytosol. It is found in the cytoplasmic vesicle. The protein localises to the autophagosome. It localises to the endoplasmic reticulum. The protein resides in the mitochondrion. It catalyses the reaction [protein]-C-terminal L-amino acid-glycyl-phosphatidylethanolamide + H2O = [protein]-C-terminal L-amino acid-glycine + a 1,2-diacyl-sn-glycero-3-phosphoethanolamine. It carries out the reaction [protein]-C-terminal L-amino acid-glycyl-phosphatidylserine + H2O = [protein]-C-terminal L-amino acid-glycine + a 1,2-diacyl-sn-glycero-3-phospho-L-serine. Inhibited by N-ethylmaleimide. Redox-regulated during autophagy since reducing conditions activate ATG4A whereas an oxidizing environment such as the presence of H(2)O(2) inhibits its activity. The cysteine protease activity compounds is inhibited by styrylquinoline compounds 4-28 and LV-320. Its function is as follows. Cysteine protease that plays a key role in autophagy by mediating both proteolytic activation and delipidation of ATG8 family proteins. Required for canonical autophagy (macroautophagy), non-canonical autophagy as well as for mitophagy. The protease activity is required for proteolytic activation of ATG8 family proteins: cleaves the C-terminal amino acid of ATG8 proteins MAP1LC3A, MAP1LC3B, MAP1LC3C, GABARAPL1, GABARAPL2 and GABARAP, to reveal a C-terminal glycine. Exposure of the glycine at the C-terminus is essential for ATG8 proteins conjugation to phosphatidylethanolamine (PE) and insertion to membranes, which is necessary for autophagy. Protease activity is also required to counteract formation of high-molecular weight conjugates of ATG8 proteins (ATG8ylation): acts as a deubiquitinating-like enzyme that removes ATG8 conjugated to other proteins, such as ATG3. In addition to the protease activity, also mediates delipidation of ATG8 family proteins. Catalyzes delipidation of PE-conjugated forms of ATG8 proteins during macroautophagy. Also involved in non-canonical autophagy, a parallel pathway involving conjugation of ATG8 proteins to single membranes at endolysosomal compartments, by catalyzing delipidation of ATG8 proteins conjugated to phosphatidylserine (PS). Compared to other members of the family (ATG4A, ATG4C or ATG4C), constitutes the major protein for proteolytic activation of ATG8 proteins, while it displays weaker delipidation activity than other ATG4 paralogs. Involved in phagophore growth during mitophagy independently of its protease activity and of ATG8 proteins: acts by regulating ATG9A trafficking to mitochondria and promoting phagophore-endoplasmic reticulum contacts during the lipid transfer phase of mitophagy. The chain is Cysteine protease ATG4B from Mus musculus (Mouse).